The following is a 358-amino-acid chain: Peptide chain release factor 1 (358 aa).

Glutamine 235 is subject to N5-methylglutamine.

The protein belongs to the prokaryotic/mitochondrial release factor family. In terms of processing, methylated by PrmC. Methylation increases the termination efficiency of RF1.

Its subcellular location is the cytoplasm. Its function is as follows. Peptide chain release factor 1 directs the termination of translation in response to the peptide chain termination codons UAG and UAA. The polypeptide is Peptide chain release factor 1 (Brachyspira hyodysenteriae (strain ATCC 49526 / WA1)).